A 1070-amino-acid polypeptide reads, in one-letter code: DNA-directed RNA polymerase subunit beta (1070 aa).

This sequence belongs to the RNA polymerase beta chain family. In terms of assembly, in plastids the minimal PEP RNA polymerase catalytic core is composed of four subunits: alpha, beta, beta', and beta''. When a (nuclear-encoded) sigma factor is associated with the core the holoenzyme is formed, which can initiate transcription.

The protein localises to the plastid. It localises to the chloroplast. It carries out the reaction RNA(n) + a ribonucleoside 5'-triphosphate = RNA(n+1) + diphosphate. In terms of biological role, DNA-dependent RNA polymerase catalyzes the transcription of DNA into RNA using the four ribonucleoside triphosphates as substrates. The chain is DNA-directed RNA polymerase subunit beta from Buxus microphylla (Littleleaf boxwood).